Reading from the N-terminus, the 206-residue chain is Reticulon-like protein B13 (206 aa).

The region spanning 16–206 (VEDIYLWRRK…GTEEKVKKSE (191 aa)) is the Reticulon domain. 3 consecutive transmembrane segments (helical) span residues 27–47 (LAFSTLLVSTSTWILLSFYGF), 50–70 (ITIVSWIGIAVVSMIFLWGSL), and 134–154 (IGNLLDFHTCLFIGLVMGLTV).

The protein localises to the endoplasmic reticulum membrane. This chain is Reticulon-like protein B13 (RTNLB13), found in Arabidopsis thaliana (Mouse-ear cress).